The primary structure comprises 305 residues: MVDKLTHLKQLEAESIHIIREVAAEFDNPVMLYSIGKDSAVMLHLARKAFFPGKLPFPVMHVDTQWKFQEMYKFRDRMVEELGLDLITHVNPDGVAQGINPFTHGSAKHTDIMKTEGLKQALDKHGFDAAFGGARRDEEKSRAKERVYSFRDSKHRWDPKNQRPELWNVYNGKVNKGESIRVFPLSNWTELDIWQYIYLEGIPIVPLYFAAEREVIEKNGTLIMIDDERILEHLSDEEKARIVKKKVRFRTLGCYPLTGAVESEAESLTDIIQEMLLTRTSERQGRVIDHDGAGSMEDKKRQGYF.

This sequence belongs to the PAPS reductase family. CysD subfamily. As to quaternary structure, heterodimer composed of CysD, the smaller subunit, and CysN.

The enzyme catalyses sulfate + ATP + H(+) = adenosine 5'-phosphosulfate + diphosphate. It participates in sulfur metabolism; hydrogen sulfide biosynthesis; sulfite from sulfate: step 1/3. In terms of biological role, with CysN forms the ATP sulfurylase (ATPS) that catalyzes the adenylation of sulfate producing adenosine 5'-phosphosulfate (APS) and diphosphate, the first enzymatic step in sulfur assimilation pathway. APS synthesis involves the formation of a high-energy phosphoric-sulfuric acid anhydride bond driven by GTP hydrolysis by CysN coupled to ATP hydrolysis by CysD. This chain is Sulfate adenylyltransferase subunit 2, found in Pseudomonas fluorescens (strain ATCC BAA-477 / NRRL B-23932 / Pf-5).